The sequence spans 501 residues: Aspartyl/glutamyl-tRNA(Asn/Gln) amidotransferase subunit B (501 aa).

Positions 272–291 (QETRHYQETDGTTSKGRPKE) are disordered.

It belongs to the GatB/GatE family. GatB subfamily. As to quaternary structure, heterotrimer of A, B and C subunits.

It carries out the reaction L-glutamyl-tRNA(Gln) + L-glutamine + ATP + H2O = L-glutaminyl-tRNA(Gln) + L-glutamate + ADP + phosphate + H(+). The enzyme catalyses L-aspartyl-tRNA(Asn) + L-glutamine + ATP + H2O = L-asparaginyl-tRNA(Asn) + L-glutamate + ADP + phosphate + 2 H(+). Allows the formation of correctly charged Asn-tRNA(Asn) or Gln-tRNA(Gln) through the transamidation of misacylated Asp-tRNA(Asn) or Glu-tRNA(Gln) in organisms which lack either or both of asparaginyl-tRNA or glutaminyl-tRNA synthetases. The reaction takes place in the presence of glutamine and ATP through an activated phospho-Asp-tRNA(Asn) or phospho-Glu-tRNA(Gln). This is Aspartyl/glutamyl-tRNA(Asn/Gln) amidotransferase subunit B from Corynebacterium efficiens (strain DSM 44549 / YS-314 / AJ 12310 / JCM 11189 / NBRC 100395).